The chain runs to 640 residues: Acid beta-fructofuranosidase 2, vacuolar (640 aa).

The segment at 1-22 (MDTNTTSYTPLPGDPFLSGPPE) is disordered. Over 1 to 29 (MDTNTTSYTPLPGDPFLSGPPETPRRPLK) the chain is Cytoplasmic. A propeptide spans 1 to 78 (MDTNTTSYTP…HPQSTTNTML (78 aa)) (removed in mature form). Residues 30–49 (GFAVIFASVIFLMSLVALII) form a helical membrane-spanning segment. Topologically, residues 50 to 616 (HQGPQQPPDV…FSPDAASHSS (567 aa)) are lumenal. Substrate contacts are provided by residues 93-96 (WMND), Q112, W120, 155-156 (WT), 219-220 (RD), E274, and D307. Residue D96 is part of the active site. C464 and C512 form a disulfide bridge. A helical membrane pass occupies residues 617 to 639 (FTPVTVFIKFIVPFGIFLTLYFV). Position 640 (R640) is a topological domain, cytoplasmic.

Belongs to the glycosyl hydrolase 32 family. In terms of tissue distribution, expressed in buds, stems, roots and leaves.

The protein localises to the membrane. The protein resides in the vacuole membrane. It carries out the reaction Hydrolysis of terminal non-reducing beta-D-fructofuranoside residues in beta-D-fructofuranosides.. In terms of biological role, vacuolar invertase. The sequence is that of Acid beta-fructofuranosidase 2, vacuolar from Rosa hybrid cultivar.